The chain runs to 450 residues: Allergen Fus c 3 (450 aa).

4 disordered regions span residues 18-87, 99-148, 185-377, and 398-426; these read EPEM…SRAQ, DLHA…HLPP, SGHP…NLVE, and QIRH…RRVS. Polar residues predominate over residues 31 to 46; sequence PHQQPISSPNRTSRNT. Residues 101–112 show a composition bias toward low complexity; that stretch reads HAPSHPSHLSHG. A compositionally biased stretch (basic and acidic residues) spans 113 to 125; the sequence is APHEQEHAHEIQR. The segment covering 272–286 has biased composition (basic residues); that stretch reads RPRKPARARRQKKEP. The span at 291–304 shows a compositional bias: polar residues; sequence DASQGARSSSTGGT. The segment covering 305 to 341 has biased composition (low complexity); the sequence is AHSVSDAASPSSTSHQSRASLTSKSASMTSAASTASS. Positions 356–377 are enriched in basic and acidic residues; the sequence is TLDKPNDTAEDRRTRASHNLVE. The bHLH domain occupies 368 to 441; the sequence is RTRASHNLVE…EMARRHIEAL (74 aa).

The chain is Allergen Fus c 3 from Fusarium culmorum.